We begin with the raw amino-acid sequence, 330 residues long: Polyprenyl transferase dpfgC (330 aa).

Asn34 carries an N-linked (GlcNAc...) asparagine glycan. A run of 7 helical transmembrane segments spans residues 105–125 (ALCV…NDWI), 146–166 (VTTT…WGVL), 175–192 (VLKH…YPFG), 199–219 (KLMI…AIPG), 237–257 (CLPL…AYSY), 273–293 (NIAG…IILA), and 310–330 (NFIL…LTSA).

It belongs to the UbiA prenyltransferase family. Mg(2+) serves as cofactor.

It localises to the membrane. The protein operates within secondary metabolite biosynthesis; terpenoid biosynthesis. Functionally, polyprenyl transferase; part of the gene cluster that mediates the biosynthesis of diterpenoid pyrones. The first step of the pathway is the synthesis of the alpha-pyrone moiety by the polyketide synthase dpfgA via condensation of one acetyl-CoA starter unit with 3 malonyl-CoA units and 2 methylations. The alpha-pyrone is then combined with geranylgeranyl pyrophosphate (GGPP) formed by the GGPP synthase dpfgD through the action of the prenyltransferase dpfgC to yield a linear alpha-pyrone diterpenoid. Subsequent steps in the diterpenoid pyrone biosynthetic pathway involve the decalin core formation, which is initiated by the epoxidation of the C10-C11 olefin by the FAD-dependent oxidoreductase dpfgE, and is followed by a cyclization cascade catalyzed by the terpene cyclase dpfgB. The short chain dehydrogenase/reductase dpfgG then oxidizes the 8S hydroxy group to a ketone and the short chain dehydrogenase/reductase dpfgH reduces the ketone to the 8R hydroxy group to yield higginsianin B. Higginsianin B is further methylated by the methyltransferase dpfgI to produce the intermediate named FDDP B. The cytochrome P450 monooxygenase dfgpJ then catalyzes a three-step oxidation at C-27 to generate a carboxylic acid as well as C-26 hydroxylation. Finally, methyltransferase dpfgK methylates the carboxylic acid generated by dpfgJ, yielding the final diterpenoid pyrones from the pathway which were named FDDP D and FDDP E. The polypeptide is Polyprenyl transferase dpfgC (Gibberella zeae (strain ATCC MYA-4620 / CBS 123657 / FGSC 9075 / NRRL 31084 / PH-1) (Wheat head blight fungus)).